The primary structure comprises 1289 residues: Outer capsid protein lambda-2 (1289 aa).

893–900 (GAAAAGKS) provides a ligand contact to ATP.

Belongs to the orthoreovirus lambda-2 protein family. In terms of assembly, interacts with protein mu-NS; in viral inclusions.

It is found in the virion. It catalyses the reaction a 5'-end diphospho-ribonucleoside in mRNA + GTP + H(+) = a 5'-end (5'-triphosphoguanosine)-ribonucleoside in mRNA + diphosphate. The catalysed reaction is a 5'-end (5'-triphosphoguanosine)-ribonucleoside in mRNA + S-adenosyl-L-methionine = a 5'-end (N(7)-methyl 5'-triphosphoguanosine)-ribonucleoside in mRNA + S-adenosyl-L-homocysteine. Functionally, outer capsid protein involved in mRNA capping. Catalyzes the last 3 enzymatic activities for formation of the 5' cap structure on the viral plus-strand transcripts, namely the RNA guanylyltransferase, RNA-7N- and RNA-2'O-methyltransferase activities. The chain is Outer capsid protein lambda-2 (L2) from Reovirus type 1 (strain Lang) (T1L).